Reading from the N-terminus, the 237-residue chain is MEKTMLTFEKVSAHYGKIQALHDVSLHINQGEIVTLIGANGAGKTTLLGTLCGDPRASSGRVVFDGKDITDWQTAKIMREAVAIVPEGRRVFSRMTVEENLAMGGFFAERDRFQERIKWVYELFPRLHERRIQRAGTMSGGEQQMLAIGRALMSQPRLLLLDEPSLGLAPIIIQQIFDTIEQLREQGMTIFLVEQNANQALKLADRGYVLENGHVVLSDTGDALLANEAVRSAYLGG.

The ABC transporter domain maps to 6–237; the sequence is LTFEKVSAHY…EAVRSAYLGG (232 aa). 38 to 45 contacts ATP; that stretch reads GANGAGKT.

Belongs to the ABC transporter superfamily.

Component of the high-affinity branched-chain amino acid transport system. This is High-affinity branched-chain amino acid transport ATP-binding protein LivF (livF) from Salmonella typhi.